The primary structure comprises 429 residues: 3-phosphoshikimate 1-carboxyvinyltransferase (429 aa).

3-phosphoshikimate contacts are provided by Lys22, Ser23, and Arg27. Lys22 lines the phosphoenolpyruvate pocket. The phosphoenolpyruvate site is built by Gly94 and Arg122. 3-phosphoshikimate-binding residues include Ser167, Gln169, Asp315, and Lys342. Residue Gln169 coordinates phosphoenolpyruvate. Catalysis depends on Asp315, which acts as the Proton acceptor. Phosphoenolpyruvate-binding residues include Arg346 and Arg388.

It belongs to the EPSP synthase family. In terms of assembly, monomer.

Its subcellular location is the cytoplasm. It carries out the reaction 3-phosphoshikimate + phosphoenolpyruvate = 5-O-(1-carboxyvinyl)-3-phosphoshikimate + phosphate. It functions in the pathway metabolic intermediate biosynthesis; chorismate biosynthesis; chorismate from D-erythrose 4-phosphate and phosphoenolpyruvate: step 6/7. Catalyzes the transfer of the enolpyruvyl moiety of phosphoenolpyruvate (PEP) to the 5-hydroxyl of shikimate-3-phosphate (S3P) to produce enolpyruvyl shikimate-3-phosphate and inorganic phosphate. The chain is 3-phosphoshikimate 1-carboxyvinyltransferase from Geotalea daltonii (strain DSM 22248 / JCM 15807 / FRC-32) (Geobacter daltonii).